A 607-amino-acid polypeptide reads, in one-letter code: Pogo transposable element with KRAB domain (607 aa).

Residues 8 to 29 adopt a coiled-coil conformation; that stretch reads LNLTLKEEQKEEEVEIQELEDG. Lys-13 is covalently cross-linked (Glycyl lysine isopeptide (Lys-Gly) (interchain with G-Cter in SUMO2)). The 72-residue stretch at 47 to 118 folds into the KRAB domain; the sequence is ALFDEVAIYF…DEWRLQGVTF (72 aa). An HTH CENPB-type domain is found at 250-323; that stretch reads AFRGPKNGRF…MRRYDLSLRH (74 aa). Residues 355 to 567 form the DDE-1 domain; it reads YEVAQMGNAD…ISSESIVQGF (213 aa). Residue Lys-384 forms a Glycyl lysine isopeptide (Lys-Gly) (interchain with G-Cter in SUMO2) linkage. A disordered region spans residues 588 to 607; sequence GELPKEPPKECGPESVAEGD. Basic and acidic residues predominate over residues 589–599; it reads ELPKEPPKECG.

The protein localises to the nucleus. The polypeptide is Pogo transposable element with KRAB domain (Pogk) (Mus musculus (Mouse)).